The following is a 541-amino-acid chain: Membrane protein insertase YidC (541 aa).

6 consecutive transmembrane segments (helical) span residues 6 to 26, 325 to 345, 349 to 369, 420 to 440, 457 to 477, and 500 to 520; these read NILL…WQAD, LVVD…LLMF, FVGN…GLLF, GGCL…WVLL, LSVQ…MFVM, and VIFT…WLVG.

The protein belongs to the OXA1/ALB3/YidC family. Type 1 subfamily. In terms of assembly, interacts with the Sec translocase complex via SecD. Specifically interacts with transmembrane segments of nascent integral membrane proteins during membrane integration.

It localises to the cell inner membrane. Its function is as follows. Required for the insertion and/or proper folding and/or complex formation of integral membrane proteins into the membrane. Involved in integration of membrane proteins that insert both dependently and independently of the Sec translocase complex, as well as at least some lipoproteins. Aids folding of multispanning membrane proteins. The polypeptide is Membrane protein insertase YidC (Shewanella baltica (strain OS195)).